Reading from the N-terminus, the 275-residue chain is 2,3,4,5-tetrahydropyridine-2,6-dicarboxylate N-succinyltransferase (275 aa).

Substrate is bound by residues Arg-104 and Asp-141.

It belongs to the transferase hexapeptide repeat family. As to quaternary structure, homotrimer.

The protein resides in the cytoplasm. It catalyses the reaction (S)-2,3,4,5-tetrahydrodipicolinate + succinyl-CoA + H2O = (S)-2-succinylamino-6-oxoheptanedioate + CoA. The protein operates within amino-acid biosynthesis; L-lysine biosynthesis via DAP pathway; LL-2,6-diaminopimelate from (S)-tetrahydrodipicolinate (succinylase route): step 1/3. This Haemophilus influenzae (strain 86-028NP) protein is 2,3,4,5-tetrahydropyridine-2,6-dicarboxylate N-succinyltransferase.